Consider the following 98-residue polypeptide: Protein S100-A13 (98 aa).

The region spanning 18–53 (STFFTFAGREGRKGSLNINEFKELATQQLPHLLKDV) is the EF-hand domain. Ca(2+) is bound by residues Ser-32, Glu-37, Asp-64, Asn-66, Asp-68, Glu-70, and Glu-75. Residue Ser-32 is modified to Phosphoserine.

Belongs to the S-100 family. In terms of assembly, homodimer. Part of a copper-dependent multiprotein complex containing S100A13, FGF1 and SYT1. Interacts with FGF1 and SYT1. Interacts with IL1A.

The protein resides in the cytoplasm. It is found in the secreted. Plays a role in the export of proteins that lack a signal peptide and are secreted by an alternative pathway. Binds two calcium ions per subunit. Binds one copper ion. Binding of one copper ion does not interfere with calcium binding. Required for the copper-dependent stress-induced export of IL1A and FGF1. The calcium-free protein binds to lipid vesicles containing phosphatidylserine, but not to vesicles containing phosphatidylcholine. The protein is Protein S100-A13 (S100a13) of Mus musculus (Mouse).